Reading from the N-terminus, the 65-residue chain is Photosystem II reaction center protein J (65 aa).

Over residues 1-18 (MSSKLKGPDGRLPDRLPD) the composition is skewed to basic and acidic residues. The segment at 1 to 21 (MSSKLKGPDGRLPDRLPDGRP) is disordered. Residues 36–56 (LWLVATAGGIAVIFVLGIFFY) traverse the membrane as a helical segment.

Belongs to the PsbJ family. PSII is composed of 1 copy each of membrane proteins PsbA, PsbB, PsbC, PsbD, PsbE, PsbF, PsbH, PsbI, PsbJ, PsbK, PsbL, PsbM, PsbT, PsbX, PsbY, Psb30/Ycf12, peripheral proteins PsbO, CyanoQ (PsbQ), PsbU, PsbV and a large number of cofactors. It forms dimeric complexes.

It localises to the cellular thylakoid membrane. Functionally, one of the components of the core complex of photosystem II (PSII). PSII is a light-driven water:plastoquinone oxidoreductase that uses light energy to abstract electrons from H(2)O, generating O(2) and a proton gradient subsequently used for ATP formation. It consists of a core antenna complex that captures photons, and an electron transfer chain that converts photonic excitation into a charge separation. The chain is Photosystem II reaction center protein J from Prochlorococcus marinus (strain SARG / CCMP1375 / SS120).